A 226-amino-acid chain; its full sequence is Elongation factor G (226 aa).

It belongs to the GTP-binding elongation factor family. EF-G/EF-2 subfamily.

Its subcellular location is the cytoplasm. In terms of biological role, catalyzes the GTP-dependent ribosomal translocation step during translation elongation. During this step, the ribosome changes from the pre-translocational (PRE) to the post-translocational (POST) state as the newly formed A-site-bound peptidyl-tRNA and P-site-bound deacylated tRNA move to the P and E sites, respectively. Catalyzes the coordinated movement of the two tRNA molecules, the mRNA and conformational changes in the ribosome. This chain is Elongation factor G (fusA), found in Neisseria gonorrhoeae.